Consider the following 470-residue polypeptide: MNARIAELLHNYLGRPPSLSEYHMLKLQHRNIQKIIAFNKDIFISLIKKNKKKFFSDIDLTSSEIKTSVLSYFSKQRDTYSIGKLYTIIELQTILVSTYTDVLGVLTLKGPDMFPSSTRYDIKSIKQIATSALHAMNVAVLSDKVMGRHNVSPLVSNVNALMEEYLRRHNKNCICYGSYSLHLLNPEVKYGDIDILQTNSRTFLIDLAFLIKFITGSNVILLKVPYLKNYMVLKDKDDNHIIDSFNIRQETMQVIPKVLIDNIYIVDPALQLMSMFKMFSQIDRLEDLARNPEKLTVRLATLMEYVRVKYGVILNGESNHMPMKGVLDKDKRIIVMDTSGYNFSFKKCFVYMDESSLSSDILDLNADDAVDFENVSNSAYLVKGDVLYTYFSNTILLSDPDTIHEISNKAMSAHILIYQILTGNDIRQPLSDLVNSLMYNEKVLIHEVIPRDKKTGKHGIIDIEKDIITH.

Residues D192 and D194 contribute to the active site.

The protein belongs to the poxviridae poly(A) polymerase catalytic subunit family. In terms of assembly, heterodimer of a large (catalytic) subunit and a small (regulatory) subunit.

The enzyme catalyses RNA(n) + ATP = RNA(n)-3'-adenine ribonucleotide + diphosphate. Polymerase that creates the 3'-poly(A) tail of mRNA's. This is Poly(A) polymerase catalytic subunit (PAPL) from Myxoma virus (strain Lausanne) (MYXV).